The chain runs to 205 residues: Ephrin-A1 (205 aa).

The first 18 residues, 1 to 18 (MEFLWAPLLGLCCSLAAA), serve as a signal peptide directing secretion. Positions 19 to 151 (DRHTVFWNSS…RLKVTVSGKI (133 aa)) constitute an Ephrin RBD domain. N-linked (GlcNAc...) asparagine glycosylation occurs at Asn-26. Intrachain disulfides connect Cys-51/Cys-92 and Cys-80/Cys-140. Ser-182 carries GPI-anchor amidated serine lipidation. A propeptide spans 183–205 (AAPRLFPLAWTVLLLPLLLLQTP) (removed in mature form).

The protein belongs to the ephrin family. Monomer. Homodimer. Forms heterodimers with EPHA2. Binds to the receptor tyrosine kinases EPHA2, EPHA3, EPHA4, EPHA5, EPHA6 and EPHA7. Also binds with low affinity to EPHA1. Post-translationally, undergoes proteolysis by a metalloprotease to give rise to a soluble monomeric form. N-Glycosylation is required for binding to EPHA2 receptor and inducing its internalization. In terms of tissue distribution, brain. Down-regulated in primary glioma tissues compared to the normal tissues. The soluble monomeric form is expressed in the glioblastoma multiforme (GBM) and breast cancer cells (at protein level).

It localises to the cell membrane. The protein localises to the secreted. In terms of biological role, cell surface GPI-bound ligand for Eph receptors, a family of receptor tyrosine kinases which are crucial for migration, repulsion and adhesion during neuronal, vascular and epithelial development. Binds promiscuously Eph receptors residing on adjacent cells, leading to contact-dependent bidirectional signaling into neighboring cells. Plays an important role in angiogenesis and tumor neovascularization. The recruitment of VAV2, VAV3 and PI3-kinase p85 subunit by phosphorylated EPHA2 is critical for EFNA1-induced RAC1 GTPase activation and vascular endothelial cell migration and assembly. Exerts anti-oncogenic effects in tumor cells through activation and down-regulation of EPHA2. Activates EPHA2 by inducing tyrosine phosphorylation which leads to its internalization and degradation. Acts as a negative regulator in the tumorigenesis of gliomas by down-regulating EPHA2 and FAK. Can evoke collapse of embryonic neuronal growth cone and regulates dendritic spine morphogenesis. This is Ephrin-A1 (EFNA1) from Homo sapiens (Human).